Reading from the N-terminus, the 651-residue chain is MRYLITTALAYTNGPLHLGHARSTYIPADIIYKYLKLRGEDVIHVGGTDNHGVPITLTAEKEGKSPEEIVEKYHNEIKEDLDLLGVEFDAFGKTHSQIHIETAQEFYLKLKENGYIYEKEIEQFYCPNCKKFLPDRYVEGICPYCGGEARGDHCEVCGRHLEPFELKDPYCVICKGKPEIRKTKHHFFKLSALKKELEEYIKNAKEMPEHVKNMALNWIKELHDWDISRDISWGVPIPGTNQVMYVWLEAPIGYISFTKMLGEIWKKYWLEKDTKIYHFIGKDITVHHAVFWPGMLIAHGSFNLPTAVVSGGYLTLEGRKMSTSKRWVVWVKDFVKNFDADYLRYYLIMSAPLFKDCDFSFDDFKNKINNELINIIGNFTHRVLTFTHRKFKKVPIVDEDRLKEEDKELLKKCEETLEAVDKNIRSFKFRDALVNILHLAIEGNSYFQKMEPWAVDDEERLKEILYTCCKTVKTLVYLLYPYMPKKSLALLELMNEELDLELRGNELKKPKIIFKKIDNKKIEEMKKKLYENKKEETKGGEKMEQIDISYLEKIDLRVGEVVEAEDIPKSKKLLKLMVDLGDEKRQIVSGIKGYYKPEDLVGKKVIVICNLKPAKLCGVLSEGMILAAEDDEGNVSLLTVDKDIKAGSKVR.

The 'HIGH' region signature appears at 10 to 20 (AYTNGPLHLGH). The Zn(2+) site is built by C142, C145, C154, and C157. Positions 320–324 (KMSTS) match the 'KMSKS' region motif. An ATP-binding site is contributed by T323. The tRNA-binding domain maps to 550–651 (YLEKIDLRVG…KDIKAGSKVR (102 aa)).

Belongs to the class-I aminoacyl-tRNA synthetase family. MetG type 1 subfamily. Homodimer. Zn(2+) serves as cofactor.

The protein localises to the cytoplasm. The catalysed reaction is tRNA(Met) + L-methionine + ATP = L-methionyl-tRNA(Met) + AMP + diphosphate. Is required not only for elongation of protein synthesis but also for the initiation of all mRNA translation through initiator tRNA(fMet) aminoacylation. The protein is Methionine--tRNA ligase of Methanocaldococcus jannaschii (strain ATCC 43067 / DSM 2661 / JAL-1 / JCM 10045 / NBRC 100440) (Methanococcus jannaschii).